The following is a 179-amino-acid chain: ATP synthase subunit delta (179 aa).

It belongs to the ATPase delta chain family. In terms of assembly, F-type ATPases have 2 components, F(1) - the catalytic core - and F(0) - the membrane proton channel. F(1) has five subunits: alpha(3), beta(3), gamma(1), delta(1), epsilon(1). F(0) has three main subunits: a(1), b(2) and c(10-14). The alpha and beta chains form an alternating ring which encloses part of the gamma chain. F(1) is attached to F(0) by a central stalk formed by the gamma and epsilon chains, while a peripheral stalk is formed by the delta and b chains.

Its subcellular location is the cell inner membrane. Functionally, f(1)F(0) ATP synthase produces ATP from ADP in the presence of a proton or sodium gradient. F-type ATPases consist of two structural domains, F(1) containing the extramembraneous catalytic core and F(0) containing the membrane proton channel, linked together by a central stalk and a peripheral stalk. During catalysis, ATP synthesis in the catalytic domain of F(1) is coupled via a rotary mechanism of the central stalk subunits to proton translocation. Its function is as follows. This protein is part of the stalk that links CF(0) to CF(1). It either transmits conformational changes from CF(0) to CF(1) or is implicated in proton conduction. In Anaeromyxobacter sp. (strain Fw109-5), this protein is ATP synthase subunit delta.